Consider the following 909-residue polypeptide: ABC transporter A family member 10 (909 aa).

The next 7 helical transmembrane spans lie at 35 to 55 (VLVP…LDVV), 320 to 340 (IASM…FPVI), 374 to 394 (FLTL…AIGL), 406 to 426 (FIFY…ASSI), 433 to 453 (ATVV…FLFG), 465 to 485 (GILA…YEFA), and 507 to 527 (LFYL…SIDL). A Phosphoserine modification is found at Ser555. Residues 587-824 (IVCDNLKKVY…YGGSYVFTMT (238 aa)) enclose the ABC transporter domain. 625–632 (GPNGAGKT) provides a ligand contact to ATP.

It belongs to the ABC transporter superfamily. ABCA family. CPR flippase (TC 3.A.1.211) subfamily.

Its subcellular location is the membrane. This Arabidopsis thaliana (Mouse-ear cress) protein is ABC transporter A family member 10 (ABCA10).